The sequence spans 183 residues: Protein CT_584 (183 aa).

Belongs to the chlamydial CPn_0803/CT_584/TC_0873 family.

The chain is Protein CT_584 from Chlamydia trachomatis serovar D (strain ATCC VR-885 / DSM 19411 / UW-3/Cx).